The primary structure comprises 426 residues: Cell cycle checkpoint control protein RAD9B (426 aa).

Residue Ser359 is modified to Phosphoserine.

Belongs to the rad9 family. Interacts with HUS1, HUS1B, RAD1, RAD9A and RAD17. In terms of tissue distribution, expressed in testis and skeletal muscle.

The protein is Cell cycle checkpoint control protein RAD9B (RAD9B) of Homo sapiens (Human).